Consider the following 20-residue polypeptide: 2-oxo-acid reductase (20 aa).

It belongs to the AOR/FOR family. In terms of assembly, forms various types of homooligomers. [4Fe-4S] cluster is required as a cofactor. Requires Mo-molybdopterin as cofactor.

It is found in the cell membrane. It catalyses the reaction a (2R)-2-hydroxycarboxylate + A = a 2-oxocarboxylate + AH2. Is inhibited by cyanide. Is sensitive to oxygen. Its function is as follows. Oxidoreductase with an extremely broad substrate specificity that can reduce reversibly 2-oxocarboxylates to (2R)-hydroxycarboxylates. This chain is 2-oxo-acid reductase, found in Proteus hauseri.